The primary structure comprises 580 residues: Glutamine--tRNA ligase (580 aa).

Positions 41–51 (PEPNGYLHIGH) match the 'HIGH' region motif. Residues 42–44 (EPN) and 48–54 (HIGHAKA) each bind ATP. The L-glutamine site is built by Asp-74 and Tyr-218. Residues Thr-237, 285 to 286 (RL), and 293 to 295 (MSK) contribute to the ATP site. Residues 292–296 (VMSKR) carry the 'KMSKS' region motif.

It belongs to the class-I aminoacyl-tRNA synthetase family. As to quaternary structure, monomer.

It is found in the cytoplasm. It carries out the reaction tRNA(Gln) + L-glutamine + ATP = L-glutaminyl-tRNA(Gln) + AMP + diphosphate. This chain is Glutamine--tRNA ligase, found in Xylella fastidiosa (strain 9a5c).